Reading from the N-terminus, the 218-residue chain is Oxidoreductase claN (218 aa).

NADP(+) contacts are provided by Lys-38, Asp-57, and Asn-82. The active-site Proton donor is Ser-134. Residues Tyr-148, Lys-152, and Thr-183 each contribute to the NADP(+) site. The Proton acceptor role is filled by Tyr-148. Lys-152 serves as the catalytic Lowers pKa of active site Tyr.

This sequence belongs to the short-chain dehydrogenases/reductases (SDR) family.

It participates in pigment biosynthesis. Its function is as follows. Oxidoreductase; part of the gene cluster that mediates the biosynthesis of the bianthraquinone cladofulvin, a conidial pigment not required for virulence but that plays a role in fitness and resistance to environmental stresses including UV light and low-temperature stress. The pathway begins with the synthesis of atrochrysone thioester by the polyketide synthase (PKS) claG. The atrochrysone carboxyl ACP thioesterase claF then breaks the thioester bond and releases the atrochrysone carboxylic acid from claG. This compound is decarboxylated by claH to yield emodin, which is further converted to chrysophanol hydroquinone by the reductase claC and the dehydratase claB. The cytochrome P450 monooxygenase claM then catalyzes the dimerization of nataloe-emodin to cladofulvin. This is Oxidoreductase claN from Passalora fulva (Tomato leaf mold).